A 90-amino-acid chain; its full sequence is Acylphosphatase (90 aa).

One can recognise an Acylphosphatase-like domain in the interval 3 to 90 (AIEVDVFGLV…FETNDFAIRG (88 aa)). Residues Arg-18 and Asn-36 contribute to the active site.

This sequence belongs to the acylphosphatase family.

It carries out the reaction an acyl phosphate + H2O = a carboxylate + phosphate + H(+). This Leuconostoc mesenteroides subsp. mesenteroides (strain ATCC 8293 / DSM 20343 / BCRC 11652 / CCM 1803 / JCM 6124 / NCDO 523 / NBRC 100496 / NCIMB 8023 / NCTC 12954 / NRRL B-1118 / 37Y) protein is Acylphosphatase (acyP).